The primary structure comprises 232 residues: Ribose-5-phosphate isomerase A (232 aa).

Residues 31–34, 87–90, and 100–103 contribute to the substrate site; these read TGST, DGAD, and KGGG. Glu109 serves as the catalytic Proton acceptor. A substrate-binding site is contributed by Lys127.

Belongs to the ribose 5-phosphate isomerase family. Homodimer.

It catalyses the reaction aldehydo-D-ribose 5-phosphate = D-ribulose 5-phosphate. It functions in the pathway carbohydrate degradation; pentose phosphate pathway; D-ribose 5-phosphate from D-ribulose 5-phosphate (non-oxidative stage): step 1/1. Its function is as follows. Catalyzes the reversible conversion of ribose-5-phosphate to ribulose 5-phosphate. In Bifidobacterium longum subsp. infantis (strain ATCC 15697 / DSM 20088 / JCM 1222 / NCTC 11817 / S12), this protein is Ribose-5-phosphate isomerase A.